The chain runs to 712 residues: Polyribonucleotide nucleotidyltransferase (712 aa).

The Mg(2+) site is built by aspartate 487 and aspartate 493. Positions proline 554–isoleucine 613 constitute a KH domain. Residues glycine 623–lysine 691 enclose the S1 motif domain.

Belongs to the polyribonucleotide nucleotidyltransferase family. Mg(2+) serves as cofactor.

The protein localises to the cytoplasm. It carries out the reaction RNA(n+1) + phosphate = RNA(n) + a ribonucleoside 5'-diphosphate. In terms of biological role, involved in mRNA degradation. Catalyzes the phosphorolysis of single-stranded polyribonucleotides processively in the 3'- to 5'-direction. This Rhizobium etli (strain CIAT 652) protein is Polyribonucleotide nucleotidyltransferase.